Reading from the N-terminus, the 242-residue chain is Ribosomal RNA small subunit methyltransferase G (242 aa).

S-adenosyl-L-methionine-binding positions include Gly78, Phe83, 129 to 130 (AE), and Arg148.

The protein belongs to the methyltransferase superfamily. RNA methyltransferase RsmG family.

Its subcellular location is the cytoplasm. Specifically methylates the N7 position of a guanine in 16S rRNA. The sequence is that of Ribosomal RNA small subunit methyltransferase G from Lachnoclostridium phytofermentans (strain ATCC 700394 / DSM 18823 / ISDg) (Clostridium phytofermentans).